A 124-amino-acid chain; its full sequence is MPTINQLIRKPRKSQKEKTASPALQNCPQKRGICTRVMTVTPKKPNSALRKVARVRLSNGFEVTAYIPGIGHNLQEHSVVLIRGGRVKDLPGVRYHIIRGAKDTLGVNNRKQGRSKYGTKRPKA.

The disordered stretch occupies residues 1–25; sequence MPTINQLIRKPRKSQKEKTASPALQ. At Asp89 the chain carries 3-methylthioaspartic acid.

Belongs to the universal ribosomal protein uS12 family. As to quaternary structure, part of the 30S ribosomal subunit. Contacts proteins S8 and S17. May interact with IF1 in the 30S initiation complex.

With S4 and S5 plays an important role in translational accuracy. In terms of biological role, interacts with and stabilizes bases of the 16S rRNA that are involved in tRNA selection in the A site and with the mRNA backbone. Located at the interface of the 30S and 50S subunits, it traverses the body of the 30S subunit contacting proteins on the other side and probably holding the rRNA structure together. The combined cluster of proteins S8, S12 and S17 appears to hold together the shoulder and platform of the 30S subunit. The polypeptide is Small ribosomal subunit protein uS12 (Borrelia duttonii (strain Ly)).